The primary structure comprises 506 residues: Glutamate--tRNA ligase (506 aa).

Positions 12–22 (PSPTGDPHVGT) match the 'HIGH' region motif. The 'KMSKS' region motif lies at 253 to 257 (KLSKR). Residue lysine 256 participates in ATP binding.

It belongs to the class-I aminoacyl-tRNA synthetase family. Glutamate--tRNA ligase type 1 subfamily. In terms of assembly, monomer.

It localises to the cytoplasm. It carries out the reaction tRNA(Glu) + L-glutamate + ATP = L-glutamyl-tRNA(Glu) + AMP + diphosphate. Functionally, catalyzes the attachment of glutamate to tRNA(Glu) in a two-step reaction: glutamate is first activated by ATP to form Glu-AMP and then transferred to the acceptor end of tRNA(Glu). This chain is Glutamate--tRNA ligase, found in Chlamydia trachomatis serovar L2 (strain ATCC VR-902B / DSM 19102 / 434/Bu).